Reading from the N-terminus, the 551-residue chain is Glucans biosynthesis protein D (551 aa).

Residues 1-32 (MDRRRFIKGSMAMAAVCGTSGIASLFSQAAFA) constitute a signal peptide (tat-type signal).

Belongs to the OpgD/OpgG family. Predicted to be exported by the Tat system. The position of the signal peptide cleavage has not been experimentally proven.

It localises to the periplasm. It functions in the pathway glycan metabolism; osmoregulated periplasmic glucan (OPG) biosynthesis. Probably involved in the control of the structural glucose backbone of osmoregulated periplasmic glucans (OPGs). This chain is Glucans biosynthesis protein D, found in Escherichia coli O1:K1 / APEC.